Consider the following 245-residue polypeptide: Membrane-associated progesterone-binding protein 4 (245 aa).

The chain crosses the membrane as a helical span at residues 6 to 26; it reads RFLLSPFVGVTFIVVLVSLYF. The region spanning 39 to 138 is the Cytochrome b5 heme-binding domain; it reads KRLFSAEELA…RTYTPVGKLV (100 aa). The interval 45 to 138 is steroid-binding; that stretch reads EELALYNGTD…RTYTPVGKLV (94 aa).

The protein belongs to the cytochrome b5 family. MAPR subfamily.

It is found in the membrane. This chain is Membrane-associated progesterone-binding protein 4, found in Arabidopsis thaliana (Mouse-ear cress).